Consider the following 460-residue polypeptide: Probable argininosuccinate lyase (460 aa).

Residues S26, N114, and T159 each coordinate 2-(N(omega)-L-arginino)succinate. The active-site Proton acceptor is the H160. Residue S281 is the Proton donor of the active site. 2-(N(omega)-L-arginino)succinate is bound by residues N289, Y321, Q326, and K329.

This sequence belongs to the lyase 1 family. Argininosuccinate lyase subfamily. In terms of assembly, homotetramer.

The catalysed reaction is 2-(N(omega)-L-arginino)succinate = fumarate + L-arginine. It functions in the pathway amino-acid biosynthesis; L-arginine biosynthesis; L-arginine from L-ornithine and carbamoyl phosphate: step 3/3. The polypeptide is Probable argininosuccinate lyase (argx) (Schizosaccharomyces pombe (strain 972 / ATCC 24843) (Fission yeast)).